The primary structure comprises 222 residues: GTP cyclohydrolase 1 (222 aa).

Residues Cys111, His114, and Cys182 each contribute to the Zn(2+) site.

This sequence belongs to the GTP cyclohydrolase I family. Toroid-shaped homodecamer, composed of two pentamers of five dimers.

It catalyses the reaction GTP + H2O = 7,8-dihydroneopterin 3'-triphosphate + formate + H(+). It participates in cofactor biosynthesis; 7,8-dihydroneopterin triphosphate biosynthesis; 7,8-dihydroneopterin triphosphate from GTP: step 1/1. In Salmonella choleraesuis (strain SC-B67), this protein is GTP cyclohydrolase 1.